A 283-amino-acid chain; its full sequence is MPELPEVEVVRRGLHAHVVGKTIGAVRVHHPRAVRRHEAGPADLTARLLGARITGTDRRGKYLWLLLDGCDTALVVHLGMSGQMLLGAVPRAEHVRISALLDDGTVLSFADQRTFGGWMLADLLEVDGSILPRPVAHLARDPLDPRFDAAAVVKVLRRKHSEIKRQLLDQQVVSGIGNIYADEALWRAKVHGARIAATMTGRQLTAVLDAAAEVMRDALAQGGTSFDSLYVNVNGESGYFDRSLDAYGREGESCRRCGAVMRREKFMNRSSFYCPKCQPRPRL.

The active-site Schiff-base intermediate with DNA is Pro2. Catalysis depends on Glu3, which acts as the Proton donor. The Proton donor; for beta-elimination activity role is filled by Lys61. 3 residues coordinate DNA: His94, Arg113, and Lys159. An FPG-type zinc finger spans residues Asp245–Pro279. Arg269 acts as the Proton donor; for delta-elimination activity in catalysis.

It belongs to the FPG family. As to quaternary structure, monomer. Zn(2+) is required as a cofactor.

The enzyme catalyses Hydrolysis of DNA containing ring-opened 7-methylguanine residues, releasing 2,6-diamino-4-hydroxy-5-(N-methyl)formamidopyrimidine.. The catalysed reaction is 2'-deoxyribonucleotide-(2'-deoxyribose 5'-phosphate)-2'-deoxyribonucleotide-DNA = a 3'-end 2'-deoxyribonucleotide-(2,3-dehydro-2,3-deoxyribose 5'-phosphate)-DNA + a 5'-end 5'-phospho-2'-deoxyribonucleoside-DNA + H(+). Functionally, involved in base excision repair of DNA damaged by oxidation or by mutagenic agents. Acts as a DNA glycosylase that recognizes and removes damaged bases. Has a preference for oxidized purines, such as 7,8-dihydro-8-oxoguanine (8-oxoG). Has AP (apurinic/apyrimidinic) lyase activity and introduces nicks in the DNA strand. Cleaves the DNA backbone by beta-delta elimination to generate a single-strand break at the site of the removed base with both 3'- and 5'-phosphates. The chain is Formamidopyrimidine-DNA glycosylase from Mycolicibacterium paratuberculosis (strain ATCC BAA-968 / K-10) (Mycobacterium paratuberculosis).